Reading from the N-terminus, the 256-residue chain is Small ribosomal subunit protein eS1 (256 aa).

Ala2 carries the N-acetylalanine; partial modification.

This sequence belongs to the eukaryotic ribosomal protein eS1 family. Component of the small ribosomal subunit. Mature ribosomes consist of a small (40S) and a large (60S) subunit. The 40S subunit contains about 33 different proteins and 1 molecule of RNA (18S). The 60S subunit contains about 49 different proteins and 3 molecules of RNA (25S, 5.8S and 5S).

It is found in the cytoplasm. The protein is Small ribosomal subunit protein eS1 of Eremothecium gossypii (strain ATCC 10895 / CBS 109.51 / FGSC 9923 / NRRL Y-1056) (Yeast).